Reading from the N-terminus, the 220-residue chain is Probable nicotinate-nucleotide adenylyltransferase (220 aa).

The protein belongs to the NadD family.

It carries out the reaction nicotinate beta-D-ribonucleotide + ATP + H(+) = deamido-NAD(+) + diphosphate. It functions in the pathway cofactor biosynthesis; NAD(+) biosynthesis; deamido-NAD(+) from nicotinate D-ribonucleotide: step 1/1. Catalyzes the reversible adenylation of nicotinate mononucleotide (NaMN) to nicotinic acid adenine dinucleotide (NaAD). This is Probable nicotinate-nucleotide adenylyltransferase from Yersinia enterocolitica serotype O:8 / biotype 1B (strain NCTC 13174 / 8081).